A 247-amino-acid polypeptide reads, in one-letter code: Protein eak-4 (247 aa).

The N-myristoyl glycine moiety is linked to residue glycine 2.

In terms of tissue distribution, expressed in the 2 embryonic head hypodermal cells XXXL/R.

Its subcellular location is the cell membrane. Functionally, together with eak-6 and sdf-9, negatively regulates dauer larva formation downstream of the insulin-like receptor daf-2 and in parallel with age-1, pdk-1 and akt-1. This chain is Protein eak-4, found in Caenorhabditis elegans.